A 760-amino-acid chain; its full sequence is Xaa-Pro dipeptidyl-peptidase (760 aa).

Active-site charge relay system residues include Ser-349, Asp-469, and His-499.

The protein belongs to the peptidase S15 family. In terms of assembly, homodimer.

It is found in the cytoplasm. It carries out the reaction Hydrolyzes Xaa-Pro-|- bonds to release unblocked, N-terminal dipeptides from substrates including Ala-Pro-|-p-nitroanilide and (sequentially) Tyr-Pro-|-Phe-Pro-|-Gly-Pro-|-Ile.. Its function is as follows. Removes N-terminal dipeptides sequentially from polypeptides having unsubstituted N-termini provided that the penultimate residue is proline. This chain is Xaa-Pro dipeptidyl-peptidase, found in Streptococcus pyogenes serotype M2 (strain MGAS10270).